We begin with the raw amino-acid sequence, 1186 residues long: Sericin 1 (1186 aa).

The signal sequence occupies residues Met1–Gly21. Composition is skewed to polar residues over residues Ala39–Asn48 and Asn104–Asp115. Disordered stretches follow at residues Ala39–Arg119, Ala131–Ser494, and Gly518–Leu1157. Residues Ala145–Ala155 are compositionally biased toward low complexity. The segment covering Ser180–Arg198 has biased composition (basic and acidic residues). A compositionally biased stretch (low complexity) spans Ser211–Ser224. The segment covering Tyr256–Ser275 has biased composition (polar residues). The span at Ala286–Ser299 shows a compositional bias: basic and acidic residues. Residues Ser300 to Ser312 are compositionally biased toward low complexity. Residues Ser321–Ser334 show a composition bias toward basic and acidic residues. 3 stretches are compositionally biased toward polar residues: residues Arg356–Lys380, Ala393–Tyr409, and Phe416–Glu445. 6 stretches are compositionally biased toward low complexity: residues Ala465–Glu491, Gly518–Ala537, Ser553–Ser698, Arg705–Ser1004, Ser1015–Glu1075, and Ser1097–Ser1145. 11 tandem repeats follow at residues Ser593 to Val630, Ser631 to Val668, Ser669 to Val706, Ser707 to Val744, Ser745 to Val782, Ser783 to Val820, Ser821 to Val858, Ser859 to Val896, Ser897 to Val934, Ser935 to Val972, and Ser973 to Val1010. The segment covering Arg1148 to Leu1157 has biased composition (basic residues).

In terms of tissue distribution, produced exclusively in the middle (MSG) section of silk glands.

The protein localises to the secreted. Its function is as follows. Provides the silk fibroin thread with a sticky coating. Acts as a cement by sticking silk threads together. In Bombyx mori (Silk moth), this protein is Sericin 1 (ser1).